An 813-amino-acid chain; its full sequence is DNA ligase (813 aa).

Residues 41-45, 90-91, and Glu127 each bind NAD(+); these read DAEYD and SI. The active-site N6-AMP-lysine intermediate is the Lys129. The NAD(+) site is built by Arg150, Glu189, Lys307, and Lys331. Residues Cys440, Cys443, Cys458, and Cys464 each contribute to the Zn(2+) site. In terms of domain architecture, BRCT spans 729-813; that stretch reads AEEGALSGKT…LLQNPPGDSA (85 aa).

The protein belongs to the NAD-dependent DNA ligase family. LigA subfamily. Mg(2+) is required as a cofactor. It depends on Mn(2+) as a cofactor.

It catalyses the reaction NAD(+) + (deoxyribonucleotide)n-3'-hydroxyl + 5'-phospho-(deoxyribonucleotide)m = (deoxyribonucleotide)n+m + AMP + beta-nicotinamide D-nucleotide.. Functionally, DNA ligase that catalyzes the formation of phosphodiester linkages between 5'-phosphoryl and 3'-hydroxyl groups in double-stranded DNA using NAD as a coenzyme and as the energy source for the reaction. It is essential for DNA replication and repair of damaged DNA. The polypeptide is DNA ligase (Ralstonia nicotianae (strain ATCC BAA-1114 / GMI1000) (Ralstonia solanacearum)).